A 345-amino-acid polypeptide reads, in one-letter code: MKALVKAKREEGIWMQHDVPVPEVGVHDVMIRVTKSAICGTDVHIYNWDEWSQKTVPVPMVVGHEYVGRVERVGAEVEAFRPGERVSGEGHVTCGFCRNCRAGRRHLCRHTVGVGVNRPGSFAEYVVIPADNVYRIPDDIPDDIAAIFDPFGNATHTALSFDLVGEDVLVTGAGPIGVMAAAIARHVGARHVVVTDVNDYRLDLARRMGASRAVNVAREDLRAVMSELGMREGFDVGLEMSGNGRAFRQLLEVMNHGGRIALLGIMPGPEPIDWSQVVFKGLQLKGVYGREMYETWYKMVAMLQSGLDLSAVVTHRFSIDDFQQGFDVMRSGRSGKVVLDWGVAR.

C39 contributes to the Zn(2+) binding site. Residues T41 and H44 each act as charge relay system in the active site. H64, E65, C94, C97, C100, and C108 together coordinate Zn(2+). Residues I176, D196, R201, L263–I265, and V287–Y288 each bind NAD(+).

Belongs to the zinc-containing alcohol dehydrogenase family. As to quaternary structure, homotetramer. It depends on Zn(2+) as a cofactor.

It localises to the cytoplasm. It carries out the reaction L-threonine + NAD(+) = (2S)-2-amino-3-oxobutanoate + NADH + H(+). Its pathway is amino-acid degradation; L-threonine degradation via oxydo-reductase pathway; glycine from L-threonine: step 1/2. Its function is as follows. Catalyzes the NAD(+)-dependent oxidation of L-threonine to 2-amino-3-ketobutyrate. The sequence is that of L-threonine 3-dehydrogenase from Anaeromyxobacter dehalogenans (strain 2CP-C).